A 179-amino-acid chain; its full sequence is Ribosome maturation factor RimM (179 aa).

The PRC barrel domain occupies 102 to 179 (DGEYYWYQLE…EMKVDWDADF (78 aa)).

It belongs to the RimM family. As to quaternary structure, binds ribosomal protein uS19.

It localises to the cytoplasm. Its function is as follows. An accessory protein needed during the final step in the assembly of 30S ribosomal subunit, possibly for assembly of the head region. Essential for efficient processing of 16S rRNA. May be needed both before and after RbfA during the maturation of 16S rRNA. It has affinity for free ribosomal 30S subunits but not for 70S ribosomes. This Pseudomonas syringae pv. syringae (strain B728a) protein is Ribosome maturation factor RimM.